Here is a 130-residue protein sequence, read N- to C-terminus: Small ribosomal subunit protein uS9 (130 aa).

It belongs to the universal ribosomal protein uS9 family.

This chain is Small ribosomal subunit protein uS9, found in Teredinibacter turnerae (strain ATCC 39867 / T7901).